The chain runs to 310 residues: Mitochondrial 2-oxodicarboxylate carrier 1 (310 aa).

6 consecutive transmembrane segments (helical) span residues 9-29 (LPFIYQFTAGAIAGVSELLVM), 78-97 (SHLYKGITSPILMEAPKRAI), 126-146 (IYSGASAGAVEAFVVAPFELV), 179-199 (GLEATIWRHVLWNAGYFGIIF), 219-239 (LIAGAIGGTVGCLLNTPFDVV), and 281-301 (MRLAPGGGLLLVVFTNVMDFF). Solcar repeat units follow at residues 9-108 (LPFI…FQTF), 120-204 (MTQK…IRKL), and 213-300 (EKTR…VMDF).

Belongs to the mitochondrial carrier (TC 2.A.29) family.

It localises to the mitochondrion inner membrane. Functionally, transports C5-C7 oxodicarboxylates across the inner membranes of mitochondria. Can transport 2-oxoadipate, 2-oxoglutarate, adipate, glutarate, 2-oxopimelate, oxaloacetate, citrate and malate. The main physiological role is probably to supply 2-oxoadipate and 2-oxoglutarate from the mitochondrial matrix to the cytosol where they are used in the biosynthesis of lysine and glutamate, respectively, and in lysine catabolism. In Saccharomyces cerevisiae (strain ATCC 204508 / S288c) (Baker's yeast), this protein is Mitochondrial 2-oxodicarboxylate carrier 1 (ODC1).